Reading from the N-terminus, the 817-residue chain is Phospholipase D alpha 2 (817 aa).

The C2 domain occupies 1 to 130 (MAHLLLHGTL…LSGEAIERRL (130 aa)). Asp192 contributes to the Ca(2+) binding site. The 40-residue stretch at 333-372 (YMITHHQKTVIVDHDMPVPRGGGSRRIVSFVGGLDLCDGR) folds into the PLD phosphodiesterase 1 domain. Catalysis depends on residues His338, Lys340, and Asp345. His338 is a binding site for a 1,2-diacyl-sn-glycero-3-phosphate. Ca(2+) contacts are provided by His378 and His412. 2 residues coordinate a 1,2-diacyl-sn-glycero-3-phosphate: Gln529 and His668. Residues 663 to 690 (FMIYVHSKMMIVDDEYIIVGSANINQRS) enclose the PLD phosphodiesterase 2 domain. Catalysis depends on residues His668, Lys670, and Asp675. Glu730 contributes to the Ca(2+) binding site.

Belongs to the phospholipase D family. C2-PLD subfamily. Requires Ca(2+) as cofactor.

It catalyses the reaction a 1,2-diacyl-sn-glycero-3-phosphocholine + H2O = a 1,2-diacyl-sn-glycero-3-phosphate + choline + H(+). Functionally, hydrolyzes glycerol-phospholipids at the terminal phosphodiesteric bond. Plays an important role in various cellular processes. The polypeptide is Phospholipase D alpha 2 (PLD2) (Oryza sativa subsp. japonica (Rice)).